A 590-amino-acid chain; its full sequence is Pentatricopeptide repeat-containing protein At2g46050, mitochondrial (590 aa).

The N-terminal 109 residues, 1–109 (MRFTFLRSTR…RNIVTWNILI (109 aa)), are a transit peptide targeting the mitochondrion. 11 PPR repeats span residues 141-175 (DHVS…GLES), 176-206 (SCFP…VLDR), 207-241 (DLVL…KNRF), 244-266 (DYFT…IHAI), 275-305 (DIPV…MVVR), 306-340 (NVVS…NLQP), 341-375 (DELT…GSAD), 376-406 (FLSV…IREP), 407-437 (DLVS…MLQK), 441-471 (DKIT…MTEF), and 477-507 (EDEH…MPTE). Residues 512–588 (ALAAFTGGCN…TPGCSWLGDY (77 aa)) are type E motif.

It belongs to the PPR family. PCMP-E subfamily.

The protein localises to the mitochondrion. This Arabidopsis thaliana (Mouse-ear cress) protein is Pentatricopeptide repeat-containing protein At2g46050, mitochondrial (PCMP-E39).